The chain runs to 213 residues: LIM domain-containing protein PLIM2c (213 aa).

LIM zinc-binding domains are found at residues 9–69 (DKCK…LFKE) and 105–165 (DKCA…LFLE). Positions 177–213 (ANHRRSTAEEDKTEPKEDEANPTEEETSDAAAEEHES) are disordered. Over residues 182-195 (STAEEDKTEPKEDE) the composition is skewed to basic and acidic residues.

Interacts with F-actin. In terms of tissue distribution, exclusively expressed in pollen grains.

Its subcellular location is the cytoplasm. The protein localises to the cytoskeleton. Its function is as follows. Binds to actin filaments and promotes cross-linking into thick bundles. Has an actin-stabilizing activity. Associates predominantly with long and dynamic actin bundles in the shank of growing pollen tubes. The actin regulatory activities are inhibited by pH &gt; 6.8 and/or high [Ca(2+)]. In Arabidopsis thaliana (Mouse-ear cress), this protein is LIM domain-containing protein PLIM2c.